A 534-amino-acid polypeptide reads, in one-letter code: Probable RNA-binding protein 46 (534 aa).

RRM domains follow at residues 61 to 139, 141 to 223, and 236 to 308; these read CEVF…VSLD, CRLF…WASP, and KVLY…LAKP.

The protein resides in the cytoplasm. Functionally, essential for male and female fertility, playing a crucial role in regulating germ cell development by ensuring the proper progression of meiosis prophase I. The chain is Probable RNA-binding protein 46 (rbm46) from Xenopus tropicalis (Western clawed frog).